The following is a 99-amino-acid chain: Aspartyl/glutamyl-tRNA(Asn/Gln) amidotransferase subunit C (99 aa).

It belongs to the GatC family. As to quaternary structure, heterotrimer of A, B and C subunits.

The catalysed reaction is L-glutamyl-tRNA(Gln) + L-glutamine + ATP + H2O = L-glutaminyl-tRNA(Gln) + L-glutamate + ADP + phosphate + H(+). The enzyme catalyses L-aspartyl-tRNA(Asn) + L-glutamine + ATP + H2O = L-asparaginyl-tRNA(Asn) + L-glutamate + ADP + phosphate + 2 H(+). In terms of biological role, allows the formation of correctly charged Asn-tRNA(Asn) or Gln-tRNA(Gln) through the transamidation of misacylated Asp-tRNA(Asn) or Glu-tRNA(Gln) in organisms which lack either or both of asparaginyl-tRNA or glutaminyl-tRNA synthetases. The reaction takes place in the presence of glutamine and ATP through an activated phospho-Asp-tRNA(Asn) or phospho-Glu-tRNA(Gln). The sequence is that of Aspartyl/glutamyl-tRNA(Asn/Gln) amidotransferase subunit C from Macrococcus caseolyticus (strain JCSC5402) (Macrococcoides caseolyticum).